The chain runs to 320 residues: Probable cell division protein WhiA (320 aa).

The segment at residues 282–315 (SLEELGRAARPQISKDAVAGRIRRLLQRAEKAEQ) is a DNA-binding region (H-T-H motif).

The protein belongs to the WhiA family.

In terms of biological role, involved in cell division and chromosome segregation. The sequence is that of Probable cell division protein WhiA from Bifidobacterium animalis subsp. lactis (strain AD011).